Consider the following 461-residue polypeptide: Cysteine--tRNA ligase (461 aa).

Cys28 contributes to the Zn(2+) binding site. The 'HIGH' region motif lies at Ile30–His40. Residues Cys209, His234, and Glu238 each contribute to the Zn(2+) site. Residues Lys266–Ser270 carry the 'KMSKS' region motif. Residue Lys269 coordinates ATP.

The protein belongs to the class-I aminoacyl-tRNA synthetase family. Monomer. The cofactor is Zn(2+).

It is found in the cytoplasm. The enzyme catalyses tRNA(Cys) + L-cysteine + ATP = L-cysteinyl-tRNA(Cys) + AMP + diphosphate. The protein is Cysteine--tRNA ligase of Escherichia coli (strain 55989 / EAEC).